The following is a 189-amino-acid chain: Peptidyl-tRNA hydrolase (189 aa).

Residue Y14 participates in tRNA binding. H19 functions as the Proton acceptor in the catalytic mechanism. Y64, N66, and N112 together coordinate tRNA.

Belongs to the PTH family. As to quaternary structure, monomer.

The protein resides in the cytoplasm. It catalyses the reaction an N-acyl-L-alpha-aminoacyl-tRNA + H2O = an N-acyl-L-amino acid + a tRNA + H(+). Its function is as follows. Hydrolyzes ribosome-free peptidyl-tRNAs (with 1 or more amino acids incorporated), which drop off the ribosome during protein synthesis, or as a result of ribosome stalling. In terms of biological role, catalyzes the release of premature peptidyl moieties from peptidyl-tRNA molecules trapped in stalled 50S ribosomal subunits, and thus maintains levels of free tRNAs and 50S ribosomes. This is Peptidyl-tRNA hydrolase from Brevibacillus brevis (strain 47 / JCM 6285 / NBRC 100599).